The following is a 281-amino-acid chain: Very long chain fatty acid elongase 7 (281 aa).

A2 carries the post-translational modification N-acetylalanine. Residues 2–27 are Lumenal-facing; the sequence is AFSDLTSRTVHLYDNWIKDADPRVED. The helical transmembrane segment at 28–48 threads the bilayer; it reads WLLMSSPLPQTILLGFYVYFV. Over 49–72 the chain is Cytoplasmic; the sequence is TSLGPKLMENRKPFELKKAMITYN. A helical transmembrane segment spans residues 73–93; sequence FFIVLFSVYMCYEFVMSGWGI. At 94 to 115 the chain is on the lumenal side; it reads GYSFRCDIVDYSRSPTALRMAR. A disulfide bridge connects residues C99 and C231. The chain crosses the membrane as a helical span at residues 116-136; that stretch reads TCWLYYFSKFIELLDTIFFVL. 3-oxoeicosanoyl-CoA is bound by residues K124, R137, K139, Q142, and H147. The Cytoplasmic segment spans residues 137–142; the sequence is RKKNSQ. The chain crosses the membrane as a helical span at residues 143–162; the sequence is VTFLHVFHHTIMPWTWWFGV. The short motif at 147–151 is the HxxHH motif element; it reads HVFHH. H150 (nucleophile) is an active-site residue. The Lumenal portion of the chain corresponds to 163-171; sequence KFAAGGLGT. The chain crosses the membrane as a helical span at residues 172 to 194; that stretch reads FHALLNTAVHVVMYSYYGLSALG. Residues Y187, K204, T208, and Q211 each contribute to the 3-oxoeicosanoyl-CoA site. Over 195–206 the chain is Cytoplasmic; sequence PAYQKYLWWKKY. Residues 207–227 traverse the membrane as a helical segment; the sequence is LTSLQLVQFVIVAIHISQFFF. Topologically, residues 228–236 are lumenal; the sequence is MEDCKYQFP. A helical membrane pass occupies residues 237–257; it reads VFACIIMSYSFMFLLLFLHFW. Topologically, residues 258 to 281 are cytoplasmic; sequence YRAYTKGQRLPKTVKNGTCKNKDN. 3-oxoeicosanoyl-CoA is bound at residue R266. Positions 277–281 match the Di-lysine motif motif; that stretch reads KNKDN.

The protein belongs to the ELO family. ELOVL7 subfamily. As to quaternary structure, homodimer. Interacts with TECR. Expressed in most tissues except heart and skeletal muscle.

The protein resides in the endoplasmic reticulum membrane. It catalyses the reaction a very-long-chain acyl-CoA + malonyl-CoA + H(+) = a very-long-chain 3-oxoacyl-CoA + CO2 + CoA. The enzyme catalyses eicosanoyl-CoA + malonyl-CoA + H(+) = 3-oxodocosanoyl-CoA + CO2 + CoA. The catalysed reaction is (5Z,8Z,11Z,14Z)-eicosatetraenoyl-CoA + malonyl-CoA + H(+) = (7Z,10Z,13Z,16Z)-3-oxodocosatetraenoyl-CoA + CO2 + CoA. It carries out the reaction (6Z,9Z,12Z)-octadecatrienoyl-CoA + malonyl-CoA + H(+) = (8Z,11Z,14Z)-3-oxoeicosatrienoyl-CoA + CO2 + CoA. It catalyses the reaction (9Z,12Z)-octadecadienoyl-CoA + malonyl-CoA + H(+) = (11Z,14Z)-3-oxoicosa-11,14-dienoyl-CoA + CO2 + CoA. The enzyme catalyses (9Z)-octadecenoyl-CoA + malonyl-CoA + H(+) = 3-oxo-(11Z)-eicosenoyl-CoA + CO2 + CoA. The catalysed reaction is octadecanoyl-CoA + malonyl-CoA + H(+) = 3-oxoeicosanoyl-CoA + CO2 + CoA. It carries out the reaction hexadecanoyl-CoA + malonyl-CoA + H(+) = 3-oxooctadecanoyl-CoA + CO2 + CoA. It catalyses the reaction (9Z,12Z,15Z)-octadecatrienoyl-CoA + malonyl-CoA + H(+) = (11Z,14Z,17Z)-3-oxoeicosatrienoyl-CoA + CO2 + CoA. It participates in lipid metabolism; fatty acid biosynthesis. Functionally, catalyzes the first and rate-limiting reaction of the four reactions that constitute the long-chain fatty acids elongation cycle. This endoplasmic reticulum-bound enzymatic process allows the addition of 2 carbons to the chain of long- and very long-chain fatty acids (VLCFAs) per cycle. Condensing enzyme with higher activity toward C18 acyl-CoAs, especially C18:3(n-3) acyl-CoAs and C18:3(n-6)-CoAs. Also active toward C20:4-, C18:0-, C18:1-, C18:2- and C16:0-CoAs, and weakly toward C20:0-CoA. Little or no activity toward C22:0-, C24:0-, or C26:0-CoAs. May participate in the production of saturated and polyunsaturated VLCFAs of different chain lengths that are involved in multiple biological processes as precursors of membrane lipids and lipid mediators. This chain is Very long chain fatty acid elongase 7, found in Homo sapiens (Human).